The primary structure comprises 1081 residues: Teashirt homolog 3 (1081 aa).

3 disordered regions span residues 25–104, 141–161, and 238–257; these read LVED…EVQV, PSSENNGGSSSSSSSSSSSCG, and HYRDDNHETDNNNPKRWSKP. Positions 26–37 are enriched in acidic residues; the sequence is VEDDVEPEEQAA. The span at 68–87 shows a compositional bias: basic and acidic residues; that stretch reads SSHEMDSESHISETSDRMAD. C2H2-type zinc fingers lie at residues 214-238 and 275-299; these read FRCKDCSAAYDTLVELTVHMNETGH and LKCMYCGHSFESLQDLSVHMIKTKH. Positions 238-247 are enriched in basic and acidic residues; that stretch reads HYRDDNHETD. The disordered stretch occupies residues 325–346; sequence SLELELPSSPDSTGGTPKATLS. Residues 387–410 form a C2H2-type 3; atypical zinc finger; sequence KCMECGSSHDTLQELTAHMMVTGH. The segment covering 474–491 has biased composition (basic and acidic residues); that stretch reads VDKEKAVPDEKPKEREKP. Disordered stretches follow at residues 474-499, 626-699, 792-824, and 855-897; these read VDKEKAVPDEKPKEREKPSEEEEKYD, EKMK…KPLS, LTKGKSDKGCSLGSGLLSPTSTSPATSSSTVTT, and TESH…RQSN. Residues 606 to 630 adopt a coiled-coil conformation; sequence NFHAMEELVKKVTEKVAKVEEKMKE. Positions 660–670 are enriched in polar residues; sequence SDGSFKSQENS. S682 bears the Phosphoserine mark. Composition is skewed to low complexity over residues 800–824 and 856–869; these read GCSLGSGLLSPTSTSPATSSSTVTT and ESHTSKSSTPSSIS. The homeobox; atypical DNA-binding region spans 891-961; that stretch reads RKGRQSNWNP…NVKYQLRRTG (71 aa). 2 consecutive C2H2-type zinc fingers follow at residues 976-998 and 1041-1064; these read FFCNDCASQIRTPSTYISHLESH and YQCKLCNRTFASKHAVKLHLSKTH.

It belongs to the teashirt C2H2-type zinc-finger protein family. In terms of assembly, interacts (via N-terminus) with HDAC1 and HDAC2; the interaction is direct. Found in a trimeric complex with APBB1 and HDAC1; the interaction between HDAC1 and APBB1 is mediated by TSHZ3. Interacts (via homeobox domain) with APBB1 (via PID domain 1). Expressed in corticostriatal neurons.

Its subcellular location is the nucleus. The protein resides in the cell projection. The protein localises to the growth cone. Functionally, transcriptional regulator involved in developmental processes. Functions in association with APBB1, SET and HDAC factors as a transcriptional repressor, that inhibits the expression of CASP4. TSHZ3-mediated transcription repression involves the recruitment of histone deacetylases HDAC1 and HDAC2. Associates with chromatin in a region surrounding the CASP4 transcriptional start site(s). Regulates the development of neurons involved in both respiratory rhythm and airflow control. Promotes maintenance of nucleus ambiguus (nA) motoneurons, which govern upper airway function, and establishes a respiratory rhythm generator (RRG) activity compatible with survival at birth. Involved in the differentiation of the proximal uretic smooth muscle cells during developmental processes. Involved in the up-regulation of myocardin, that directs the expression of smooth muscle cells in the proximal ureter. Involved in the modulation of glutamatergic synaptic transmission and long-term synaptic potentiation. This Mus musculus (Mouse) protein is Teashirt homolog 3 (Tshz3).